Here is a 462-residue protein sequence, read N- to C-terminus: Arginine biosynthesis bifunctional protein ArgJ, mitochondrial (462 aa).

Substrate is bound by residues Thr-200, Lys-228, Thr-239, Glu-326, Asn-457, and Thr-462. The active-site Nucleophile is Thr-239.

Belongs to the ArgJ family. In terms of assembly, heterodimer of an alpha and a beta chain. In terms of processing, the alpha and beta chains are autoproteolytically processed from a single precursor protein within the mitochondrion.

Its subcellular location is the mitochondrion matrix. The enzyme catalyses N(2)-acetyl-L-ornithine + L-glutamate = N-acetyl-L-glutamate + L-ornithine. It carries out the reaction L-glutamate + acetyl-CoA = N-acetyl-L-glutamate + CoA + H(+). Its pathway is amino-acid biosynthesis; L-arginine biosynthesis; L-ornithine and N-acetyl-L-glutamate from L-glutamate and N(2)-acetyl-L-ornithine (cyclic): step 1/1. The protein operates within amino-acid biosynthesis; L-arginine biosynthesis; N(2)-acetyl-L-ornithine from L-glutamate: step 1/4. In terms of biological role, catalyzes two activities which are involved in the cyclic version of arginine biosynthesis: the synthesis of acetylglutamate from glutamate and acetyl-CoA, and of ornithine by transacetylation between acetylornithine and glutamate. This Pyrenophora tritici-repentis (strain Pt-1C-BFP) (Wheat tan spot fungus) protein is Arginine biosynthesis bifunctional protein ArgJ, mitochondrial.